We begin with the raw amino-acid sequence, 184 residues long: Succinate dehydrogenase cytochrome b560 subunit, mitochondrial (184 aa).

Residues leucine 65–leucine 94 traverse the membrane as a helical segment. Topologically, residues proline 95 to valine 114 are mitochondrial intermembrane. Residues threonine 115–phenylalanine 139 form a helical membrane-spanning segment. Residue histidine 129 participates in heme binding. Residues aspartate 140–asparagine 147 are Mitochondrial matrix-facing. A helical membrane pass occupies residues isoleucine 148–isoleucine 169. Residues valine 170–asparagine 172 lie on the Mitochondrial intermembrane side of the membrane.

Belongs to the cytochrome b560 family. Component of complex II composed of four subunits: a flavoprotein (FP), iron-sulfur protein (IP), and a cytochrome b560 composed of two transmembrane proteins. Heme is required as a cofactor.

It is found in the mitochondrion inner membrane. It participates in carbohydrate metabolism; tricarboxylic acid cycle. Its function is as follows. Membrane-anchoring subunit of succinate dehydrogenase (SDH) that is involved in complex II of the mitochondrial electron transport chain and is responsible for transferring electrons from succinate to ubiquinone (coenzyme Q). Mediates resistance to enteropathogenic E.coli infection. The polypeptide is Succinate dehydrogenase cytochrome b560 subunit, mitochondrial (mev-1) (Caenorhabditis briggsae).